Consider the following 188-residue polypeptide: Elongation factor P-like protein (188 aa).

It belongs to the elongation factor P family.

This is Elongation factor P-like protein from Vibrio vulnificus (strain CMCP6).